A 510-amino-acid chain; its full sequence is ATP synthase subunit alpha (510 aa).

170–177 is an ATP binding site; sequence GDRQTGKT.

The protein belongs to the ATPase alpha/beta chains family. As to quaternary structure, F-type ATPases have 2 components, CF(1) - the catalytic core - and CF(0) - the membrane proton channel. CF(1) has five subunits: alpha(3), beta(3), gamma(1), delta(1), epsilon(1). CF(0) has three main subunits: a(1), b(2) and c(9-12). The alpha and beta chains form an alternating ring which encloses part of the gamma chain. CF(1) is attached to CF(0) by a central stalk formed by the gamma and epsilon chains, while a peripheral stalk is formed by the delta and b chains.

It is found in the cell inner membrane. The catalysed reaction is ATP + H2O + 4 H(+)(in) = ADP + phosphate + 5 H(+)(out). Functionally, produces ATP from ADP in the presence of a proton gradient across the membrane. The alpha chain is a regulatory subunit. The sequence is that of ATP synthase subunit alpha from Dictyoglomus thermophilum (strain ATCC 35947 / DSM 3960 / H-6-12).